The following is a 480-amino-acid chain: Aspartyl/glutamyl-tRNA(Asn/Gln) amidotransferase subunit B (480 aa).

The protein belongs to the GatB/GatE family. GatB subfamily. Heterotrimer of A, B and C subunits.

It catalyses the reaction L-glutamyl-tRNA(Gln) + L-glutamine + ATP + H2O = L-glutaminyl-tRNA(Gln) + L-glutamate + ADP + phosphate + H(+). The enzyme catalyses L-aspartyl-tRNA(Asn) + L-glutamine + ATP + H2O = L-asparaginyl-tRNA(Asn) + L-glutamate + ADP + phosphate + 2 H(+). In terms of biological role, allows the formation of correctly charged Asn-tRNA(Asn) or Gln-tRNA(Gln) through the transamidation of misacylated Asp-tRNA(Asn) or Glu-tRNA(Gln) in organisms which lack either or both of asparaginyl-tRNA or glutaminyl-tRNA synthetases. The reaction takes place in the presence of glutamine and ATP through an activated phospho-Asp-tRNA(Asn) or phospho-Glu-tRNA(Gln). The chain is Aspartyl/glutamyl-tRNA(Asn/Gln) amidotransferase subunit B from Streptococcus pneumoniae (strain P1031).